The chain runs to 494 residues: Acetyl-coenzyme A carboxylase carboxyl transferase subunit beta, chloroplastic (494 aa).

Positions 230–494 constitute a CoA carboxyltransferase N-terminal domain; that stretch reads LWVQCENCYG…LHGFFPLNQN (265 aa). The Zn(2+) site is built by Cys-234, Cys-237, Cys-253, and Cys-256. Residues 234-256 form a C4-type zinc finger; it reads CENCYGLNYKKFFRSKMNICEQC.

This sequence belongs to the AccD/PCCB family. Acetyl-CoA carboxylase is a heterohexamer composed of biotin carboxyl carrier protein, biotin carboxylase and 2 subunits each of ACCase subunit alpha and ACCase plastid-coded subunit beta (accD). Requires Zn(2+) as cofactor.

The protein localises to the plastid. Its subcellular location is the chloroplast stroma. It catalyses the reaction N(6)-carboxybiotinyl-L-lysyl-[protein] + acetyl-CoA = N(6)-biotinyl-L-lysyl-[protein] + malonyl-CoA. Its pathway is lipid metabolism; malonyl-CoA biosynthesis; malonyl-CoA from acetyl-CoA: step 1/1. In terms of biological role, component of the acetyl coenzyme A carboxylase (ACC) complex. Biotin carboxylase (BC) catalyzes the carboxylation of biotin on its carrier protein (BCCP) and then the CO(2) group is transferred by the transcarboxylase to acetyl-CoA to form malonyl-CoA. This is Acetyl-coenzyme A carboxylase carboxyl transferase subunit beta, chloroplastic from Drimys granadensis.